A 569-amino-acid chain; its full sequence is uncharacterized protein (569 aa).

Positions 1–21 are cleaved as a signal peptide; that stretch reads MLCVMMLLFSAIASFPVSAQA. The Extracellular portion of the chain corresponds to 22–530; the sequence is KDQDAGILII…DHHRQTPLEK (509 aa). Residues 531 to 551 traverse the membrane as a helical segment; that stretch reads ALWILSAVVLLFVIMFVSYTF. Residues 552–569 are Cytoplasmic-facing; it reads YLRATLKKRIFKERRSLG.

It is found in the cell membrane. This is an uncharacterized protein from Bacillus subtilis (strain 168).